Here is a 252-residue protein sequence, read N- to C-terminus: Indole-3-glycerol phosphate synthase (252 aa).

Belongs to the TrpC family.

The enzyme catalyses 1-(2-carboxyphenylamino)-1-deoxy-D-ribulose 5-phosphate + H(+) = (1S,2R)-1-C-(indol-3-yl)glycerol 3-phosphate + CO2 + H2O. The protein operates within amino-acid biosynthesis; L-tryptophan biosynthesis; L-tryptophan from chorismate: step 4/5. The sequence is that of Indole-3-glycerol phosphate synthase from Bacillus licheniformis (strain ATCC 14580 / DSM 13 / JCM 2505 / CCUG 7422 / NBRC 12200 / NCIMB 9375 / NCTC 10341 / NRRL NRS-1264 / Gibson 46).